Here is a 499-residue protein sequence, read N- to C-terminus: CD-NTase-associated protein 4 (499 aa).

The segment at Met1–Ala226 is N-terminal endonuclease domain. Residues Asp49 and Gln72 contribute to the active site. Asp49 lines the Mg(2+) pocket. Ile73 lines the Mg(2+) pocket. Lys74 is a catalytic residue. The tract at residues Phe258 to Val464 is C-terminal SAVED domain.

The protein belongs to the Cap4 nuclease family. In terms of assembly, a monomer in the absence of ligand, in its presence it forms oligomers. It depends on Mg(2+) as a cofactor.

With respect to regulation, DNase activity is activated upon ligand binding (cAAG). Inhibited by EDTA. Functionally, effector DNase of a CBASS antivirus system. CBASS (cyclic oligonucleotide-based antiphage signaling system) provides immunity against bacteriophages. The CD-NTase protein (CdnD) synthesizes cyclic nucleotides in response to infection; these serve as specific second messenger signals. The signals activate a diverse range of effectors, leading to bacterial cell death and thus abortive phage infection. A type II-C(AAG) CBASS system. In terms of biological role, binds second messenger 3',3',3'-cyclic AMP-AMP-GMP (cAAG). In the presence of cAAG (synthesized by the cognate CD-NTase protein in the CBASS operon), endonucleolytically degrades dsDNA to approximately 17 bp length fragments, with a preference for 5'-C|NG sites. Only binds DNA in the presence of cAAG. Not activated by c-di-AMP, c-di-GMP, 3',3'-cyclic GMP-AMP (cGAMP) or the second messenger of A.baumanii strain ATCC 27244. Its function is as follows. Protects E.coli against phage T2 infection. When the cdnD-cap2-cap3-cap4 operon is introduced in E.coli there is a more than 10(3) decrease in the efficiency of T2 plaque formation. The operon does not protect against phage T5 and only about 10-fold against T7. Expression of cdnD-cap4 alone protects E.coli against phage T2 infection. The sequence is that of CD-NTase-associated protein 4 from Enterobacter hormaechei subsp. hoffmannii (strain UCI 50).